Consider the following 300-residue polypeptide: Protein FANTASTIC FOUR 4 (300 aa).

Residues 30-56 (PQLSTPLKSHFQNSSIAPQDNPITINA) show a composition bias toward polar residues. Disordered stretches follow at residues 30–104 (PQLS…SPSS), 142–170 (TMETRTTSTTSNPSRQDRKRNTMASLPPP), and 227–264 (TETKEEKEEEEEETIETVRDNEEEIPEYKEEEEEKEEE). Composition is skewed to low complexity over residues 58 to 88 (SLPSSSPNPSSNSDTNSGSWSFLESLSNSSS) and 142 to 151 (TMETRTTSTT). The region spanning 166–217 (SLPPPLTSMIGFDCIEVKSHRENGRLVMMATRPPPRNRCLQDRSNGCVRLAI) is the FAF domain. A compositionally biased stretch (acidic residues) spans 233–262 (KEEEEEETIETVRDNEEEIPEYKEEEEEKE).

It belongs to the fantastic four family. Expressed in the shoot apex and young siliques. Detected in provascular and vascular tissue, but not in the vegetative meristem. In inflorescences, restricted to the base of the flower and to the vasculature of the stem and the pedicels, but absent from young flowers. Detected in the center of the inflorescence meristem.

Its function is as follows. Regulates the size of the shoot meristem by modulating the CLV3-WUS feedback loop. Can repress WUS but is under negative control by CLV3. The sequence is that of Protein FANTASTIC FOUR 4 (FAF4) from Arabidopsis thaliana (Mouse-ear cress).